A 262-amino-acid chain; its full sequence is MARLSWGYGEHNGPIHWNELFPIADGDQQSPIEIKTKEVKYDSSLRPLSIKYDPASAKIISNSGHSFNVDFDDTEDKSVLRGGPLTGNYRLRQFHLHWGSADDHGSEHVVDGVRYAAELHVVHWNSDKYPSFVEAAHESDGLAVLGVFLQIGEHNPQLQKITDILDSIKEKGKQTRFTNFDPLCLLPSSWDYWTYPGSLTVPPLLESVTWIVLKQPISISSQQLARFRSLLCTAEGESAAFLLSNHRPPQPLKGRRVRASFY.

An Alpha-carbonic anhydrase domain is found at 4–261 (LSWGYGEHNG…LKGRRVRASF (258 aa)). Catalysis depends on histidine 65, which acts as the Proton donor/acceptor. Residues histidine 95, histidine 97, and histidine 120 each contribute to the Zn(2+) site. Substrate is bound at residue 200–201 (TV).

It belongs to the alpha-carbonic anhydrase family. Zn(2+) serves as cofactor. Expressed in spleen, lung, kidney, heart, brain, skeletal muscle and testis.

The catalysed reaction is hydrogencarbonate + H(+) = CO2 + H2O. With respect to regulation, inhibited by coumarins, sulfonamide derivatives such as acetazolamide (AZA) and Foscarnet (phosphonoformate trisodium salt). In terms of biological role, reversible hydration of carbon dioxide. This Mus musculus (Mouse) protein is Carbonic anhydrase 13 (Ca13).